A 199-amino-acid chain; its full sequence is ATP-dependent Clp protease proteolytic subunit 2 (199 aa).

Ser98 serves as the catalytic Nucleophile. Residue His123 is part of the active site.

The protein belongs to the peptidase S14 family. Fourteen ClpP subunits assemble into 2 heptameric rings which stack back to back to give a disk-like structure with a central cavity, resembling the structure of eukaryotic proteasomes.

It localises to the cytoplasm. It carries out the reaction Hydrolysis of proteins to small peptides in the presence of ATP and magnesium. alpha-casein is the usual test substrate. In the absence of ATP, only oligopeptides shorter than five residues are hydrolyzed (such as succinyl-Leu-Tyr-|-NHMec, and Leu-Tyr-Leu-|-Tyr-Trp, in which cleavage of the -Tyr-|-Leu- and -Tyr-|-Trp bonds also occurs).. Functionally, cleaves peptides in various proteins in a process that requires ATP hydrolysis. Has a chymotrypsin-like activity. Plays a major role in the degradation of misfolded proteins. In Corynebacterium diphtheriae (strain ATCC 700971 / NCTC 13129 / Biotype gravis), this protein is ATP-dependent Clp protease proteolytic subunit 2.